We begin with the raw amino-acid sequence, 337 residues long: MTLQIGVIGCGAIGQDHIRRLTRKLSGARVVAVNDIDPQQARDAVTKYGLDAEIYGDGHEVVAAADVQAVLVTSWGPTHEAFVLDAIAHGKPVFCEKPLAVTAQGCMRIVEAEVAHGRRLVQVGFMRPYDEGYRALKHVIDSGGIGAPLMLHCAHRNQSVGERYTTDMAITDTLIHELDVLRWLLGEDYTSAQVVYPKKTRHASAHLADPQIVLLETASGVRIDVEIFVNCQYGYDIQCEVVGENGIAKLPDPPAVGLKHAARQSVEIMTDWKERFIASYDVELQAFIDGVRQGALTGPSAWDGYAAAVAADACVRAQQSGAVEPIAMAERPAFYRG.

Belongs to the Gfo/Idh/MocA family. As to quaternary structure, homotetramer.

It carries out the reaction myo-inositol + NAD(+) = scyllo-inosose + NADH + H(+). In terms of biological role, involved in the oxidation of myo-inositol (MI) to 2-keto-myo-inositol (2KMI or 2-inosose). This is Inositol 2-dehydrogenase from Burkholderia ambifaria (strain MC40-6).